We begin with the raw amino-acid sequence, 1368 residues long: DNA-directed RNA polymerase subunit beta (1368 aa).

This sequence belongs to the RNA polymerase beta chain family. In terms of assembly, the RNAP catalytic core consists of 2 alpha, 1 beta, 1 beta' and 1 omega subunit. When a sigma factor is associated with the core the holoenzyme is formed, which can initiate transcription.

It carries out the reaction RNA(n) + a ribonucleoside 5'-triphosphate = RNA(n+1) + diphosphate. Functionally, DNA-dependent RNA polymerase catalyzes the transcription of DNA into RNA using the four ribonucleoside triphosphates as substrates. The sequence is that of DNA-directed RNA polymerase subunit beta from Legionella pneumophila (strain Corby).